We begin with the raw amino-acid sequence, 324 residues long: MHRTTRIKITELNPHLMCVLCGGYFIDATTIIECLHSFCKTCIVRYLETSKYCPICDVQVHKTRPLLNIRSDKTLQDIVYKLVPGLFKNEMKRRRDFYAAHPSADAANGSNEDRGEVADEEKRIITDDEIISLSIEFFDQSRLDRKVNKEKPKEEVNDKRYLRCPAAMTVMHLRKFLRSKMDIPNTFQIDVMYEEEPLKDYYTLMDIAYIYTWRRNGPLPLKYRVRPTCKRMKMSHQRDGLTNAGELESDSGSDKANSPAGGVPSTSSCLPSPSTPVQSPHPQFPHISSTMNGTSNSPSANHQSSFASRPRKSSLNGSSATSSG.

The RING-type zinc-finger motif lies at 18–57 (CVLCGGYFIDATTIIECLHSFCKTCIVRYLETSKYCPICD). The Nuclear localization signal signature appears at 81–95 (KLVPGLFKNEMKRRR). Positions 160–180 (RYLRCPAAMTVMHLRKFLRSK) are interaction with PHC2. Residues 162–226 (LRCPAAMTVM…GPLPLKYRVR (65 aa)) form an interaction with E4F1 region. The tract at residues 232–324 (MKMSHQRDGL…LNGSSATSSG (93 aa)) is disordered. Positions 264-276 (PSTSSCLPSPSTP) are enriched in low complexity. Over residues 277–307 (VQSPHPQFPHISSTMNGTSNSPSANHQSSFA) the composition is skewed to polar residues. Residues 313 to 324 (SSLNGSSATSSG) are compositionally biased toward low complexity.

As to quaternary structure, component of a PRC1-like complex. Identified in a PRC1-like HPRC-H complex with CBX2, CBX4, CBX8, PHC1, PHC2, PHC3, RING1 and RNF2. Interacts with RNF2/RING2. Interacts with RING1. Part of a complex that contains RNF2, UB2D3 and BMI1, where RNF2 and BMI1 form a tight heterodimer, and UB2D3 interacts only with RNF2. The complex composed of RNF2, UB2D3 and BMI1 binds nucleosomes, and has activity only with nucleosomal histone H2A. Interacts with CBX7 and CBX8. Interacts with SPOP. Part of a complex consisting of BMI1, CUL3 and SPOP. Interacts with E4F1. Interacts with PHC2. Interacts with zinc finger protein ZNF277. May be part of a complex including at least ZNF277, BMI1 and RNF2/RING2. Post-translationally, may be polyubiquitinated; which does not lead to proteasomal degradation. Monoubiquitinated. Detected in most organs with high expression levels in thymus, heart, brain and testis.

Its subcellular location is the nucleus. The protein localises to the cytoplasm. Functionally, component of a Polycomb group (PcG) multiprotein PRC1-like complex, a complex class required to maintain the transcriptionally repressive state of many genes, including Hox genes, throughout development. PcG PRC1 complex acts via chromatin remodeling and modification of histones; it mediates monoubiquitination of histone H2A 'Lys-119', rendering chromatin heritably changed in its expressibility. The complex composed of RNF2, UB2D3 and BMI1 binds nucleosomes, and has activity only with nucleosomal histone H2A. In the PRC1-like complex, regulates the E3 ubiquitin-protein ligase activity of RNF2/RING2. This is Polycomb complex protein BMI-1 (Bmi1) from Mus musculus (Mouse).